Consider the following 591-residue polypeptide: Probable LRR receptor-like serine/threonine-protein kinase At1g69990 (591 aa).

The first 18 residues, 1 to 18 (MKTISIFFVIILMSSSHA), serve as a signal peptide directing secretion. The Extracellular segment spans residues 19–218 (EDDVLCLKGF…GKNLTIIVTA (200 aa)). An N-linked (GlcNAc...) asparagine glycan is attached at Asn-46. LRR repeat units follow at residues 66 to 88 (RILS…LKLC), 90 to 111 (SLQS…QICS), 115 to 137 (YLVT…IVDC), 139 to 162 (FLNS…TRLN), and 163 to 185 (RLQR…LSHY). N-linked (GlcNAc...) asparagine glycosylation occurs at Asn-211. Residues 219–239 (GVIGAVGSLCVGFGMFWWFFI) traverse the membrane as a helical segment. The Cytoplasmic segment spans residues 240–591 (RDRRKMNNYG…LIFNKQEHLK (352 aa)). A Phosphothreonine modification is found at Thr-292. The Protein kinase domain maps to 295-573 (FDSGNIVVSS…KNLGDQHGFF (279 aa)). ATP-binding positions include 301–309 (VVSSRSGVS) and Lys-323. Ser-378 bears the Phosphoserine mark. Thr-389 is modified (phosphothreonine). Tyr-463 is modified (phosphotyrosine). Ser-465 bears the Phosphoserine mark. Thr-466 carries the phosphothreonine modification. Ser-470 is modified (phosphoserine).

Belongs to the protein kinase superfamily. Ser/Thr protein kinase family.

The protein resides in the membrane. It carries out the reaction L-seryl-[protein] + ATP = O-phospho-L-seryl-[protein] + ADP + H(+). The catalysed reaction is L-threonyl-[protein] + ATP = O-phospho-L-threonyl-[protein] + ADP + H(+). The sequence is that of Probable LRR receptor-like serine/threonine-protein kinase At1g69990 from Arabidopsis thaliana (Mouse-ear cress).